Here is a 207-residue protein sequence, read N- to C-terminus: Riboflavin synthase (207 aa).

Lumazine-binding repeat units follow at residues 1–94 and 95–191; these read MFTG…LGGH and IVQG…INYL. Residues 4 to 6, 45 to 47, 59 to 64, 98 to 100, lysine 133, 142 to 144, and 156 to 161 each bind 2,4-dihydroxypteridine; these read GLV, CLT, DVSPET, GHV, SLT, and NIIPHT.

In terms of assembly, homotrimer.

It catalyses the reaction 2 6,7-dimethyl-8-(1-D-ribityl)lumazine + H(+) = 5-amino-6-(D-ribitylamino)uracil + riboflavin. It participates in cofactor biosynthesis; riboflavin biosynthesis; riboflavin from 2-hydroxy-3-oxobutyl phosphate and 5-amino-6-(D-ribitylamino)uracil: step 2/2. In terms of biological role, catalyzes the dismutation of two molecules of 6,7-dimethyl-8-ribityllumazine, resulting in the formation of riboflavin and 5-amino-6-(D-ribitylamino)uracil. This Aquifex aeolicus (strain VF5) protein is Riboflavin synthase (ribE).